We begin with the raw amino-acid sequence, 91 residues long: Small ribosomal subunit protein uS19 (91 aa).

Belongs to the universal ribosomal protein uS19 family.

Its function is as follows. Protein S19 forms a complex with S13 that binds strongly to the 16S ribosomal RNA. This Ralstonia pickettii (strain 12J) protein is Small ribosomal subunit protein uS19.